Reading from the N-terminus, the 424-residue chain is 5-methylthioadenosine/S-adenosylhomocysteine deaminase (424 aa).

Positions 60 and 62 each coordinate Zn(2+). Positions 89 and 181 each coordinate substrate. H208 contacts Zn(2+). Substrate contacts are provided by E211 and D296. D296 is a binding site for Zn(2+).

The protein belongs to the metallo-dependent hydrolases superfamily. MTA/SAH deaminase family. It depends on Zn(2+) as a cofactor.

The enzyme catalyses S-adenosyl-L-homocysteine + H2O + H(+) = S-inosyl-L-homocysteine + NH4(+). It catalyses the reaction S-methyl-5'-thioadenosine + H2O + H(+) = S-methyl-5'-thioinosine + NH4(+). In terms of biological role, catalyzes the deamination of 5-methylthioadenosine and S-adenosyl-L-homocysteine into 5-methylthioinosine and S-inosyl-L-homocysteine, respectively. Is also able to deaminate adenosine. The polypeptide is 5-methylthioadenosine/S-adenosylhomocysteine deaminase (Thermococcus kodakarensis (strain ATCC BAA-918 / JCM 12380 / KOD1) (Pyrococcus kodakaraensis (strain KOD1))).